Here is a 451-residue protein sequence, read N- to C-terminus: Sensor histidine kinase CssS (451 aa).

The Cytoplasmic portion of the chain corresponds to 1–9 (MKNKPLAFQ). The helical transmembrane segment at 10–30 (IWVVISGILLAISILLLVLFS) threads the bilayer. The Extracellular segment spans residues 31-165 (NTLRDFFTNE…RDDLAYTLFK (135 aa)). A helical transmembrane segment spans residues 166–186 (QLLFIIAVVILLSWIPAIWLA). Positions 187-239 (KYLSRPLVSFEKHVKRISEQDWDDPVKVDRKDEIGKLGHTIEEMRQKLVQKDE) constitute an HAMP domain. Over 187-451 (KYLSRPLVSF…GVTYRIAVPK (265 aa)) the chain is Cytoplasmic. The Histidine kinase domain occupies 247–451 (NISHDLKTPV…GVTYRIAVPK (205 aa)). H250 is subject to Phosphohistidine; by autocatalysis.

It localises to the cell membrane. It catalyses the reaction ATP + protein L-histidine = ADP + protein N-phospho-L-histidine.. Its function is as follows. Member of the two-component regulatory system CssS/CssR required to control the cellular response to secretion stress. Required for the transcription of htrA. Could detect misfolded proteins at the membrane-cell wall interface and then activate CssR by phosphorylation. This Bacillus subtilis (strain 168) protein is Sensor histidine kinase CssS (cssS).